Reading from the N-terminus, the 268-residue chain is Tetratricopeptide repeat protein 33 (268 aa).

The disordered stretch occupies residues 14–34 (VSKQTVQQFEQDSEQADEDEV). A compositionally biased stretch (acidic residues) spans 24 to 34 (QDSEQADEDEV). 3 TPR repeats span residues 60 to 93 (SKRL…TPED), 94 to 127 (AVLY…RPIW), and 128 to 161 (WEAW…HPSE). The tract at residues 249 to 268 (EGDDNPTSSSQSVLIKARGL) is disordered.

The chain is Tetratricopeptide repeat protein 33 (ttc33) from Danio rerio (Zebrafish).